A 201-amino-acid polypeptide reads, in one-letter code: Increased recombination centers protein 21 (201 aa).

One can recognise a Cytochrome b5 heme-binding domain in the interval 122 to 200 (PLRINRKIVK…LQVCFIGVVC (79 aa)). The heme site is built by histidine 158 and histidine 182.

Belongs to the cytochrome b5 family.

Its function is as follows. Involved in resistance to carboplatin and cisplatin. Is probably involved in a pathway contributing to genomic integrity. The sequence is that of Increased recombination centers protein 21 (IRC21) from Saccharomyces cerevisiae (strain ATCC 204508 / S288c) (Baker's yeast).